Consider the following 534-residue polypeptide: Phenylalanine N-monooxygenase CYP79D16 (534 aa).

The N-terminal stretch at 1-21 (MEANVGFLTLCLAITLVRFLM) is a signal peptide. Cys-472 contributes to the heme binding site. The N-linked (GlcNAc...) asparagine glycan is linked to Asn-500.

The protein belongs to the cytochrome P450 family. It depends on heme as a cofactor. In terms of tissue distribution, expressed in seedlings.

The catalysed reaction is L-phenylalanine + 2 reduced [NADPH--hemoprotein reductase] + 2 O2 = (E)-phenylacetaldehyde oxime + 2 oxidized [NADPH--hemoprotein reductase] + CO2 + 3 H2O + 2 H(+). Involved in L-phenylalanine-derived cyanogenic glycoside biosynthesis, including prunasin and amygdalin defensive agents. Catalyzes the conversion of L-phenylalanine (Phe) into phenylacetaldoxime (PAOx). Cannot use tyrosine (Tyr), tryptophan (Trp) and valine (Val) as substrates. This Prunus mume (Japanese apricot) protein is Phenylalanine N-monooxygenase CYP79D16.